A 215-amino-acid chain; its full sequence is Sodium channel regulatory subunit beta-2 (215 aa).

A signal peptide spans Met-1–Ser-29. At Met-30 to Thr-157 the chain is on the extracellular side. The Ig-like C2-type domain occupies Val-32 to Arg-154. Residues Asn-42, Asn-66, and Asn-74 are each glycosylated (N-linked (GlcNAc...) asparagine). 2 cysteine pairs are disulfide-bonded: Cys-50–Cys-127 and Cys-72–Cys-75. A helical membrane pass occupies residues Val-158 to Val-179. Topologically, residues Val-180–Lys-215 are cytoplasmic. Residues Glu-188–Lys-215 form a disordered region. Positions Gln-189–Lys-215 are enriched in basic and acidic residues. Ser-192 is subject to Phosphoserine.

Belongs to the sodium channel auxiliary subunit SCN2B (TC 8.A.17) family. A voltage-gated sodium (Nav) channel consists of an ion-conducting pore-forming alpha subunit functional on its own that is regulated by one or more beta subunits. The beta subunit SCN2B is disulfide-linked to the pore-forming alpha subunit. Interacts with SCN1A; regulatory subunit of SCN1A/Nav1.1. Interacts with SCN2A; regulatory subunit of SCN2A/Nav1.2. Interacts with SCN3A; regulatory subunit of SCN3A/Nav1.3. Interacts with SCN5A; regulatory subunit of SCN5A/Nav1.5. Interacts with SCN8A; regulatory subunit of SCN8A/Nav1.6. Interacts with SCN9A; regulatory subunit of SCN9A/Nav1.7. Interacts with SCN10A; regulatory subunit of SCN10A/Nav1.8. Interacts with TNR; may play a crucial role in clustering and regulation of activity of SCN2B-containing Nav channels at nodes of Ranvier.

The protein localises to the cell membrane. It localises to the cell projection. The protein resides in the axon. Regulatory subunit of multiple voltage-gated sodium (Nav) channels directly mediating the depolarization of excitable membranes. Navs, also called VGSCs (voltage-gated sodium channels) or VDSCs (voltage-dependent sodium channels), operate by switching between closed and open conformations depending on the voltage difference across the membrane. In the open conformation they allow Na(+) ions to selectively pass through the pore, along their electrochemical gradient. The influx of Na+ ions provokes membrane depolarization, initiating the propagation of electrical signals throughout cells and tissues. The accessory beta subunits participate in localization and functional modulation of the Nav channels. Modulates the activity of SCN1A/Nav1.1, SCN2A/Nav1.2, SCN2A/Nav1.3, SCN5A/Nav1.5, SCN8A/Nav1.6, SCN9A/Nav1.7 and SCN10A/Nav1.8. This Mus musculus (Mouse) protein is Sodium channel regulatory subunit beta-2.